Consider the following 113-residue polypeptide: Tubulin-folding cofactor A (113 aa).

The disordered stretch occupies residues 83 to 113 (LEETDEKEGPEIEDAKKTVADVEKQFPTEDA). The segment covering 89-113 (KEGPEIEDAKKTVADVEKQFPTEDA) has biased composition (basic and acidic residues).

The protein belongs to the TBCA family. As to quaternary structure, monomer. Supercomplex made of cofactors A to E. Cofactors A and D function by capturing and stabilizing tubulin in a quasi-native conformation. Cofactor E binds to the cofactor D-tubulin complex; interaction with cofactor C then causes the release of tubulin polypeptides that are committed to the native state. Interacts with TUBB9. In terms of tissue distribution, expressed in leaves, roots, flowers and stems.

Tubulin-folding protein involved in the control of the alpha-/beta-tubulin monomer balance. Functions as a reservoir of bound and non-toxic beta-tubulin. Required in the developing embryo. The sequence is that of Tubulin-folding cofactor A (TFCA) from Arabidopsis thaliana (Mouse-ear cress).